We begin with the raw amino-acid sequence, 1442 residues long: DNA-binding protein RFX7 (1442 aa).

Residues 1–36 (MEEEQQQQQQQQQAQKMQGTEQSAQLPPSAPGALPA) are disordered. The segment at residues 112–187 (AFSWIRNTLE…YCYSGLRKKA (76 aa)) is a DNA-binding region (RFX-type winged-helix). Positions 192-197 (PSLPNL) match the PxLPxI/L motif motif. Disordered stretches follow at residues 406–426 (MQSV…GDRS), 485–514 (SAGT…KNGS), and 929–1001 (SVTP…SVPP). Residues 935–947 (TPTPTPTPTPTLT) show a composition bias toward pro residues. The span at 957–995 (GTQSLSRESPCSRLAQTTPVDSALGSSRHTPVGTPHSNC) shows a compositional bias: polar residues.

The protein belongs to the RFX family.

It is found in the nucleus. In terms of biological role, transcription factor. Acts as a transcriptional activator by binding to promoter regions of target genes. Plays a role in natural killer (NK) cell maintenance and immunity. Plays a role in the process of ciliogenesis in the neural tube and neural tube closure by regulating the expression of RFX4. The polypeptide is DNA-binding protein RFX7 (Xenopus laevis (African clawed frog)).